Reading from the N-terminus, the 1523-residue chain is uncharacterized protein (1523 aa).

A disordered region spans residues 1-89 (MLPTSSNNEE…GSSNMNPYDR (89 aa)). An ATP-binding site is contributed by 993–1000 (SPFGCGKS). Composition is skewed to polar residues over residues 1463–1476 (TSRQ…NEYN) and 1485–1498 (QSNN…SVTN). The segment at 1463–1498 (TSRQSKQQRANEYNSQHKHVKRQSNNDYGSQRSVTN) is disordered.

Belongs to the DNA2/NAM7 helicase family.

This is an uncharacterized protein from Caenorhabditis elegans.